The following is a 142-amino-acid chain: Large ribosomal subunit protein uL13 (142 aa).

Belongs to the universal ribosomal protein uL13 family. Part of the 50S ribosomal subunit.

This protein is one of the early assembly proteins of the 50S ribosomal subunit, although it is not seen to bind rRNA by itself. It is important during the early stages of 50S assembly. The sequence is that of Large ribosomal subunit protein uL13 from Photorhabdus laumondii subsp. laumondii (strain DSM 15139 / CIP 105565 / TT01) (Photorhabdus luminescens subsp. laumondii).